The sequence spans 290 residues: 33 kDa chaperonin (290 aa).

2 disulfides stabilise this stretch: C231–C233 and C264–C267.

This sequence belongs to the HSP33 family. Post-translationally, under oxidizing conditions two disulfide bonds are formed involving the reactive cysteines. Under reducing conditions zinc is bound to the reactive cysteines and the protein is inactive.

It is found in the cytoplasm. In terms of biological role, redox regulated molecular chaperone. Protects both thermally unfolding and oxidatively damaged proteins from irreversible aggregation. Plays an important role in the bacterial defense system toward oxidative stress. This is 33 kDa chaperonin from Photorhabdus laumondii subsp. laumondii (strain DSM 15139 / CIP 105565 / TT01) (Photorhabdus luminescens subsp. laumondii).